We begin with the raw amino-acid sequence, 451 residues long: Probable glycine dehydrogenase (decarboxylating) subunit 1 (451 aa).

This sequence belongs to the GcvP family. N-terminal subunit subfamily. The glycine cleavage system is composed of four proteins: P, T, L and H. In this organism, the P 'protein' is a heterodimer of two subunits.

The catalysed reaction is N(6)-[(R)-lipoyl]-L-lysyl-[glycine-cleavage complex H protein] + glycine + H(+) = N(6)-[(R)-S(8)-aminomethyldihydrolipoyl]-L-lysyl-[glycine-cleavage complex H protein] + CO2. In terms of biological role, the glycine cleavage system catalyzes the degradation of glycine. The P protein binds the alpha-amino group of glycine through its pyridoxal phosphate cofactor; CO(2) is released and the remaining methylamine moiety is then transferred to the lipoamide cofactor of the H protein. This Thioalkalivibrio sulfidiphilus (strain HL-EbGR7) protein is Probable glycine dehydrogenase (decarboxylating) subunit 1.